Reading from the N-terminus, the 497-residue chain is NAD(P)H-quinone oxidoreductase chain 4, chloroplastic (497 aa).

13 consecutive transmembrane segments (helical) span residues 4–24 (LPWLTIIVLLPICAGLLIPLF), 35–55 (YTLGICIIEFLLITYIFCCHF), 87–107 (MGLILLTGFVTTLATLAAWPV), 113–133 (LFHFLMLAMYSGQIGLFASQD), 134–154 (ILLFFFMWELELIPIYLLLSI), 167–187 (FILYTAGGSIFLLIGALTIGL), 207–227 (IALEIIIYSGFLIAYAVKLPI), 242–262 (HYSTCMLLAGILLKMGGYGLI), 274–294 (AIFAPWMVMFGAVQIVYASLI), 313–333 (MGFVMIGIGSLTNIGLNGAIL), 386–406 (LALPGMSGFVAELMVFLGIVI), 416–436 (IVITIIEAIGIILTPIYLLSM), and 462–482 (IFISLCLLLPIIGIGLYPNLV).

This sequence belongs to the complex I subunit 4 family.

It is found in the plastid. The protein localises to the chloroplast thylakoid membrane. The catalysed reaction is a plastoquinone + NADH + (n+1) H(+)(in) = a plastoquinol + NAD(+) + n H(+)(out). It catalyses the reaction a plastoquinone + NADPH + (n+1) H(+)(in) = a plastoquinol + NADP(+) + n H(+)(out). The chain is NAD(P)H-quinone oxidoreductase chain 4, chloroplastic from Angiopteris evecta (Mule's foot fern).